Here is a 301-residue protein sequence, read N- to C-terminus: 3-methyl-2-oxobutanoate hydroxymethyltransferase (301 aa).

The span at 1-12 shows a compositional bias: polar residues; that stretch reads MAPSNLPESTTP. The tract at residues 1–24 is disordered; sequence MAPSNLPESTTPAEVPAPYGTGPA. Mg(2+) contacts are provided by Asp-82 and Asp-121. 3-methyl-2-oxobutanoate-binding positions include 82 to 83, Asp-121, and Lys-151; that span reads DS. Glu-153 contacts Mg(2+). Glu-219 serves as the catalytic Proton acceptor.

It belongs to the PanB family. As to quaternary structure, homodecamer; pentamer of dimers. Mg(2+) is required as a cofactor.

It localises to the cytoplasm. It catalyses the reaction 3-methyl-2-oxobutanoate + (6R)-5,10-methylene-5,6,7,8-tetrahydrofolate + H2O = 2-dehydropantoate + (6S)-5,6,7,8-tetrahydrofolate. Its pathway is cofactor biosynthesis; (R)-pantothenate biosynthesis; (R)-pantoate from 3-methyl-2-oxobutanoate: step 1/2. Its function is as follows. Catalyzes the reversible reaction in which hydroxymethyl group from 5,10-methylenetetrahydrofolate is transferred onto alpha-ketoisovalerate to form ketopantoate. The chain is 3-methyl-2-oxobutanoate hydroxymethyltransferase from Paenarthrobacter aurescens (strain TC1).